We begin with the raw amino-acid sequence, 311 residues long: Transcription factor MafB (311 aa).

Disordered regions lie at residues 35 to 78 and 150 to 199; these read PLGR…PTEQ and EDLA…EDRF. Over residues 54–76 the composition is skewed to low complexity; sequence SVSSTPISTPCSSVPSSPSFSPT. Positions 157–167 are enriched in basic residues; it reads HPHHHHHHHHQ. A compositionally biased stretch (low complexity) spans 168–194; that stretch reads ASPTPSTSSSSSQQLQTSHQQHPPSSS. The tract at residues 226–251 is basic motif; that stretch reads RLKQKRRTLKNRGYAQSCRYKRVQQK. The 64-residue stretch at 226 to 289 folds into the bZIP domain; the sequence is RLKQKRRTLK…DAYKLKCEKL (64 aa). Positions 254–275 are leucine-zipper; the sequence is LENEKTQLIQQVEQLKQEVTRL.

Belongs to the bZIP family. Maf subfamily. In terms of assembly, homodimer or heterodimer with other bHLH-Zip transcription factors. Binds DNA as a homodimer or heterodimer. Self-associates; the interaction requires the intact MAFB leucine-zipper domain. Interacts with FOS, HOXD12 and PRRX1. As to expression, expressed in brain, thymus, gut, lung, mesenterium, spleen, kidney, ovary and bursa.

It localises to the nucleus. In terms of biological role, acts as a transcriptional activator or repressor. Positively regulates the expression of alpha-A crystallin genes during lens fiber cell differentiation. Binds to Maf recognition elements (MARE). The sequence is that of Transcription factor MafB (MAFB) from Gallus gallus (Chicken).